The primary structure comprises 393 residues: Lipid-A-disaccharide synthase (393 aa).

The protein belongs to the LpxB family.

The catalysed reaction is a lipid X + a UDP-2-N,3-O-bis[(3R)-3-hydroxyacyl]-alpha-D-glucosamine = a lipid A disaccharide + UDP + H(+). Its pathway is bacterial outer membrane biogenesis; LPS lipid A biosynthesis. Condensation of UDP-2,3-diacylglucosamine and 2,3-diacylglucosamine-1-phosphate to form lipid A disaccharide, a precursor of lipid A, a phosphorylated glycolipid that anchors the lipopolysaccharide to the outer membrane of the cell. The chain is Lipid-A-disaccharide synthase from Bordetella bronchiseptica (strain ATCC BAA-588 / NCTC 13252 / RB50) (Alcaligenes bronchisepticus).